The chain runs to 500 residues: MEDFQVYFELYRSQQHDLLYPLIFRESIYALAHDRGLNRSVLLDNVGYDKKASLLIIKRLISRMYQQNRFIISFNDSNQNKFLGYNKNLYSQMISEGFAVIVEIPFSLRLVSSLEETETVKSYNLRSIHSIFPFLEDKFPHLNYASDVLIPYPIHLEILVQTLRYCMKDPSSLHLLRLFLYEYYSWNTVITPKKSLFAKRNQRLFLLLYNSYVGEYESILLFLRNQSNHLRLTSFRIFFERIRFYEKIKYPVEEVLFPATLWFFKDPFIQYVSYQGKSILASKDTPLLMTKWKYYLVNFWQCHFYVWSQPGRIHINQLFKYSFDFLGYLSSIRPNISVVRSQLLENSFLMNNLMKKLDTLFPTIPMIGSLAKVKFCNTLGHPISKSSWADLSDSDIIGRFVRIGGNLSHYYSGSSKKKSLYRIKYILRLSCVKTLARKHKSTVRTFLKRLGPKLLDEFFTEEEQVFALLFPRTSSTSKRLYRGQIWYLDILCINDLVNHE.

The protein belongs to the intron maturase 2 family. MatK subfamily.

It localises to the plastid. The protein resides in the chloroplast. Functionally, usually encoded in the trnK tRNA gene intron. Probably assists in splicing its own and other chloroplast group II introns. The polypeptide is Maturase K (Argentina anserina (Silverweed cinquefoil)).